A 79-amino-acid polypeptide reads, in one-letter code: Protein GOLVEN 2 (79 aa).

A signal peptide spans 1-26 (MAIRVSHKSFLVALLLILFISSPTQA). Positions 27-65 (RSLREVVRNRTLLVVEKSQESRKIRHEGGGSDVDGLMDM) are excised as a propeptide. The tract at residues 49–79 (KIRHEGGGSDVDGLMDMDYNSANKKRPIHNR) is disordered. Tyrosine 67 is subject to Sulfotyrosine. Proline 75 carries the post-translational modification Hydroxyproline.

The protein belongs to the RGF family. As to quaternary structure, binds to LRR receptor-like serine/threonine-protein kinases to trigger their dimerization with SERK proteins and subsequent signaling. Expressed in siliques, stems, hypocotyls, shoot apex, leaves, flowers and cotyledons, and, to a lower extent, in roots.

The protein resides in the secreted. Its subcellular location is the endoplasmic reticulum. Signaling peptide (root growth factor) that regulates the pattern of root growth and lateral root development by modulating the length and the number of cortical cells in the root apical meristem (RAM), and the anticlinal asymmetric cell divisions in lateral root initiation cells. Also involved in the regulation of hypocotyl bending and root gravitropism, probably by influencing the formation of auxin gradients. Maintains the postembryonic root stem cell niche. The chain is Protein GOLVEN 2 from Arabidopsis thaliana (Mouse-ear cress).